Consider the following 197-residue polypeptide: Fe/S biogenesis protein NfuA (197 aa).

Cys-155 and Cys-158 together coordinate [4Fe-4S] cluster.

The protein belongs to the NfuA family. As to quaternary structure, homodimer. It depends on [4Fe-4S] cluster as a cofactor.

In terms of biological role, involved in iron-sulfur cluster biogenesis. Binds a 4Fe-4S cluster, can transfer this cluster to apoproteins, and thereby intervenes in the maturation of Fe/S proteins. Could also act as a scaffold/chaperone for damaged Fe/S proteins. This chain is Fe/S biogenesis protein NfuA, found in Pseudomonas savastanoi pv. phaseolicola (strain 1448A / Race 6) (Pseudomonas syringae pv. phaseolicola (strain 1448A / Race 6)).